Consider the following 72-residue polypeptide: uncharacterized protein (72 aa).

The next 2 membrane-spanning stretches (helical) occupy residues Trp15–Ile35 and Ile50–Ile70.

The protein localises to the host membrane. This is an uncharacterized protein from Spiroplasma melliferum (SpV1).